Here is a 380-residue protein sequence, read N- to C-terminus: GPI-anchor transamidase (380 aa).

The N-terminal stretch at 1 to 19 (MIVQFVALLLLNLLQIIAA) is a signal peptide. At 20–354 (ESSHTNNWAV…TRELKYKKHP (335 aa)) the chain is on the lumenal side. Catalysis depends on residues His-145 and Cys-187. A glycan (N-linked (GlcNAc...) asparagine) is linked at Asn-307. A helical membrane pass occupies residues 355-375 (ISRIISAVVCISFSIGFPYYA). The Cytoplasmic segment spans residues 376–380 (SKYLK).

This sequence belongs to the peptidase C13 family. In terms of assembly, forms a complex with PIG-T homolog, PIG-U homolog and PIG-S homolog. In terms of processing, the disulfide bond between PIGK/GPI8 and PIGT is important for normal enzyme activity.

The protein resides in the endoplasmic reticulum membrane. The protein operates within glycolipid biosynthesis; glycosylphosphatidylinositol-anchor biosynthesis. In terms of biological role, mediates GPI anchoring in the endoplasmic reticulum, by replacing a protein's C-terminal GPI attachment signal peptide with a pre-assembled GPI. During this transamidation reaction, the GPI transamidase forms a carbonyl intermediate with the substrate protein. This Schizosaccharomyces pombe (strain 972 / ATCC 24843) (Fission yeast) protein is GPI-anchor transamidase (gpi8).